Reading from the N-terminus, the 245-residue chain is 1-(5-phosphoribosyl)-5-[(5-phosphoribosylamino)methylideneamino] imidazole-4-carboxamide isomerase (245 aa).

Catalysis depends on aspartate 7, which acts as the Proton acceptor. Residue aspartate 129 is the Proton donor of the active site.

Belongs to the HisA/HisF family.

It localises to the cytoplasm. The catalysed reaction is 1-(5-phospho-beta-D-ribosyl)-5-[(5-phospho-beta-D-ribosylamino)methylideneamino]imidazole-4-carboxamide = 5-[(5-phospho-1-deoxy-D-ribulos-1-ylimino)methylamino]-1-(5-phospho-beta-D-ribosyl)imidazole-4-carboxamide. The protein operates within amino-acid biosynthesis; L-histidine biosynthesis; L-histidine from 5-phospho-alpha-D-ribose 1-diphosphate: step 4/9. The sequence is that of 1-(5-phosphoribosyl)-5-[(5-phosphoribosylamino)methylideneamino] imidazole-4-carboxamide isomerase from Buchnera aphidicola subsp. Cinara cedri (strain Cc).